The following is a 184-amino-acid chain: Endoribonuclease YbeY (184 aa).

2 stretches are compositionally biased toward acidic residues: residues 1–11 (MTVEVGADENP) and 19–29 (DGAGDESDDED). A disordered region spans residues 1-38 (MTVEVGADENPDFAHDETDGAGDESDDEDAQGRDPELD). Zn(2+)-binding residues include histidine 146, histidine 150, and histidine 156.

This sequence belongs to the endoribonuclease YbeY family. Requires Zn(2+) as cofactor.

Its subcellular location is the cytoplasm. Single strand-specific metallo-endoribonuclease involved in late-stage 70S ribosome quality control and in maturation of the 3' terminus of the 16S rRNA. This chain is Endoribonuclease YbeY, found in Burkholderia pseudomallei (strain K96243).